We begin with the raw amino-acid sequence, 366 residues long: Ribosomal RNA large subunit methyltransferase M (366 aa).

S-adenosyl-L-methionine-binding positions include Ser188, 221–224 (CPGG), Asp240, Asp260, and Asp277. Lys306 functions as the Proton acceptor in the catalytic mechanism.

The protein belongs to the class I-like SAM-binding methyltransferase superfamily. RNA methyltransferase RlmE family. RlmM subfamily. In terms of assembly, monomer.

It localises to the cytoplasm. It carries out the reaction cytidine(2498) in 23S rRNA + S-adenosyl-L-methionine = 2'-O-methylcytidine(2498) in 23S rRNA + S-adenosyl-L-homocysteine + H(+). In terms of biological role, catalyzes the 2'-O-methylation at nucleotide C2498 in 23S rRNA. This Shigella boydii serotype 4 (strain Sb227) protein is Ribosomal RNA large subunit methyltransferase M.